The sequence spans 345 residues: 3-dehydroquinate synthase (345 aa).

NAD(+) contacts are provided by residues aspartate 62–lysine 67, glycine 96–aspartate 100, threonine 120–threonine 121, lysine 133, lysine 142, and phenylalanine 160–threonine 163. Zn(2+) contacts are provided by glutamate 175, histidine 233, and histidine 250.

Belongs to the sugar phosphate cyclases superfamily. Dehydroquinate synthase family. It depends on Co(2+) as a cofactor. Zn(2+) serves as cofactor. The cofactor is NAD(+).

It is found in the cytoplasm. It carries out the reaction 7-phospho-2-dehydro-3-deoxy-D-arabino-heptonate = 3-dehydroquinate + phosphate. The protein operates within metabolic intermediate biosynthesis; chorismate biosynthesis; chorismate from D-erythrose 4-phosphate and phosphoenolpyruvate: step 2/7. Catalyzes the conversion of 3-deoxy-D-arabino-heptulosonate 7-phosphate (DAHP) to dehydroquinate (DHQ). This chain is 3-dehydroquinate synthase, found in Campylobacter concisus (strain 13826).